Consider the following 260-residue polypeptide: Type III pantothenate kinase (260 aa).

An ATP-binding site is contributed by Asp6–Lys13. Substrate-binding positions include Tyr88 and Gly95–Arg98. The active-site Proton acceptor is Asp97. Ser121 is a binding site for ATP. A substrate-binding site is contributed by Thr184.

Belongs to the type III pantothenate kinase family. As to quaternary structure, homodimer. NH4(+) is required as a cofactor. It depends on K(+) as a cofactor.

The protein localises to the cytoplasm. It carries out the reaction (R)-pantothenate + ATP = (R)-4'-phosphopantothenate + ADP + H(+). It participates in cofactor biosynthesis; coenzyme A biosynthesis; CoA from (R)-pantothenate: step 1/5. Its function is as follows. Catalyzes the phosphorylation of pantothenate (Pan), the first step in CoA biosynthesis. The sequence is that of Type III pantothenate kinase from Saccharophagus degradans (strain 2-40 / ATCC 43961 / DSM 17024).